Here is a 469-residue protein sequence, read N- to C-terminus: MTRPVRTRFAPSPTGFIHLGNIRSALYPWAFARKMKGTFVLRIEDTDLERSTEASVDAILEGMAWLGLDYDEGPYYQMQRMDRYREVLAQMLEKDLVYPCYMSTEELDALRERQRAAGEKPRYDGTWRPEPGKVLPEPPAGVTPVLRFRNPLTGSVVWDDAVKGRVEISNEELDDLVIARPDGTPTYNFCVVVDDLDMGITHVIRGDDHVNNTPRQINILRALGGEVPVYAHLPTVLNEQGEKMSKRHGAMSVMGYRDAGYLPEAVLNYLARLGWSHGDAEIFSREQFVEWFDLEHLGKSPAQYDHNKLNWLNNHYIKEADDARLAELAKPFFAALGIDADTIARGPDLVGVMGLMKDRASTVKEIAENSTMFYRAPAPDAQALAQHVTDAVRPALAEFAAALKTAEWTKEAIAAALKAVLGAHKLKMPQLAMPVRLLVAGTTHTPSIDAVLLLFGRDVVVSRLAAALA.

The 'HIGH' region signature appears at 11-21 (PSPTGFIHLGN). Positions 118–131 (GEKPRYDGTWRPEP) are enriched in basic and acidic residues. The disordered stretch occupies residues 118-139 (GEKPRYDGTWRPEPGKVLPEPP). Positions 243–247 (KMSKR) match the 'KMSKS' region motif. Lysine 246 contributes to the ATP binding site.

This sequence belongs to the class-I aminoacyl-tRNA synthetase family. Glutamate--tRNA ligase type 1 subfamily. In terms of assembly, monomer.

The protein localises to the cytoplasm. It carries out the reaction tRNA(Glu) + L-glutamate + ATP = L-glutamyl-tRNA(Glu) + AMP + diphosphate. Catalyzes the attachment of glutamate to tRNA(Glu) in a two-step reaction: glutamate is first activated by ATP to form Glu-AMP and then transferred to the acceptor end of tRNA(Glu). In Burkholderia pseudomallei (strain 1106a), this protein is Glutamate--tRNA ligase.